The following is a 1053-amino-acid chain: Serine/threonine-protein phosphatase 6 regulatory ankyrin repeat subunit A (1053 aa).

27 ANK repeats span residues 40 to 69 (EKRT…RVNA), 73 to 102 (KWLT…DVNA), 106 to 135 (NWQT…NVNV), 139 to 168 (AGRT…NINA), 172 to 201 (KDRR…EVTC), 205 to 234 (KSYT…DMNE), 238 to 267 (YGNT…IVNQ), 271 to 301 (KGFT…DVNM), 305 to 334 (DGKT…VIDC), 338 to 367 (NGNT…DTAK), 371 to 400 (HGMF…DIDT), 404 to 433 (FGRT…DFNK), 437 to 466 (FGRS…SVND), 470 to 500 (RGCT…NPGI), 504 to 534 (QGYN…DVLM), 549 to 578 (ATIS…DLDV), 582 to 611 (SGRT…SILV), 616 to 645 (LKRT…PQNA), 652 to 681 (NGQT…NVDA), 685 to 714 (WGRT…KCLL), 718 to 747 (RGRT…SMDA), 755 to 784 (HGYT…FQKT), 787 to 817 (NAFS…SIVN), 822 to 851 (KGRT…QVNS), 855 to 885 (TGKT…ELTL), 889 to 918 (SKNT…DRNL), and 925 to 954 (ALQT…SVLA). S1007 and S1011 each carry phosphoserine.

As to quaternary structure, protein phosphatase 6 (PP6) holoenzyme is proposed to be a heterotrimeric complex formed by the catalytic subunit, a SAPS domain-containing subunit (PP6R) and an ankyrin repeat-domain containing regulatory subunit (ARS). Interacts with PPP6C, PPP6R1 and PPP6R3. Interacts with PPP1C and HNRPK. Ubiquitinated by the ECS(RAB40C) complex leading to its degradation and decreased PP6 activity.

It localises to the nucleus. Its subcellular location is the nucleoplasm. It is found in the cytoplasm. The protein localises to the cytosol. The protein resides in the cell projection. It localises to the lamellipodium. Regulatory subunit of protein phosphatase 6 (PP6) that may be involved in the recognition of phosphoprotein substrates. Involved in the PP6-mediated dephosphorylation of NFKBIE opposing its degradation in response to TNF-alpha. Selectively inhibits the phosphatase activity of PPP1C. Targets PPP1C to modulate HNRPK phosphorylation. Involved in the PP6-mediated dephosphorylation of MOB1 and induced focal adhesion assembly during cell migration. The polypeptide is Serine/threonine-protein phosphatase 6 regulatory ankyrin repeat subunit A (Homo sapiens (Human)).